We begin with the raw amino-acid sequence, 339 residues long: Tetraacyldisaccharide 4'-kinase (339 aa).

62–69 (VAGGTGKT) serves as a coordination point for ATP.

The protein belongs to the LpxK family.

The enzyme catalyses a lipid A disaccharide + ATP = a lipid IVA + ADP + H(+). It functions in the pathway glycolipid biosynthesis; lipid IV(A) biosynthesis; lipid IV(A) from (3R)-3-hydroxytetradecanoyl-[acyl-carrier-protein] and UDP-N-acetyl-alpha-D-glucosamine: step 6/6. In terms of biological role, transfers the gamma-phosphate of ATP to the 4'-position of a tetraacyldisaccharide 1-phosphate intermediate (termed DS-1-P) to form tetraacyldisaccharide 1,4'-bis-phosphate (lipid IVA). This is Tetraacyldisaccharide 4'-kinase from Xylella fastidiosa (strain M23).